The chain runs to 199 residues: uncharacterized protein (199 aa).

The tract at residues 1-48 (MSANEFYSSGQQGQYNQQNNQERTGAPNNGQYGADNGNPNGERGLFST) is disordered. Serine 2 is subject to N-acetylserine. A compositionally biased stretch (low complexity) spans 7 to 21 (YSSGQQGQYNQQNNQ). Polar residues predominate over residues 22 to 31 (ERTGAPNNGQ). Serine 53 and serine 70 each carry phosphoserine. The disordered stretch occupies residues 89–199 (RKEHKQQEQY…RQGFNGGSRW (111 aa)). 3 stretches are compositionally biased toward gly residues: residues 124 to 163 (GGFGGPGGPGGQGFGRQGPQGFGGPGPQEFGGPGGQGFGG), 170 to 179 (GGPGGQGFGG), and 186 to 199 (GGQGRQGFNGGSRW).

Its subcellular location is the mitochondrion. This is an uncharacterized protein from Saccharomyces cerevisiae (strain ATCC 204508 / S288c) (Baker's yeast).